Reading from the N-terminus, the 164-residue chain is Peptidyl-prolyl cis-trans isomerase CYP18-2 (164 aa).

A PPIase cyclophilin-type domain is found at 12 to 162; sequence VTLETSMGPF…HEVKILRTKV (151 aa).

The protein belongs to the cyclophilin-type PPIase family. In terms of tissue distribution, ubiquitous.

The protein resides in the cytoplasm. The enzyme catalyses [protein]-peptidylproline (omega=180) = [protein]-peptidylproline (omega=0). Functionally, PPIases accelerate the folding of proteins. It catalyzes the cis-trans isomerization of proline imidic peptide bonds in oligopeptides. This Arabidopsis thaliana (Mouse-ear cress) protein is Peptidyl-prolyl cis-trans isomerase CYP18-2 (CYP18-2).